A 1210-amino-acid polypeptide reads, in one-letter code: Epidermal growth factor receptor (1210 aa).

The first 24 residues, M1 to A24, serve as a signal peptide directing secretion. Residues L25–S645 lie on the Extracellular side of the membrane. A disulfide bond links C31 and C58. The N-linked (GlcNAc...) (complex) asparagine; atypical; partial glycan is linked to N56. The N-linked (GlcNAc...) asparagine; atypical glycan is linked to N73. An Approximate repeat occupies D75–V300. N128, N175, and N196 each carry an N-linked (GlcNAc...) asparagine glycan. Disulfide bonds link C157-C187, C190-C199, C194-C207, C215-C223, C219-C231, C232-C240, C236-C248, C251-C260, C264-C291, C295-C307, C311-C326, C329-C333, and C337-C362. Phosphoserine is present on S229. N-linked (GlcNAc...) asparagine glycans are attached at residues N352, N361, N413, and N444. The stretch at Q390–M600 is one Approximate repeat. Intrachain disulfides connect C470-C499, C506-C515, C510-C523, C526-C535, C539-C555, C558-C571, C562-C579, C582-C591, C595-C617, C620-C628, and C624-C636. The N-linked (GlcNAc...) asparagine glycan is linked to N528. Residue N568 is glycosylated (N-linked (GlcNAc...) asparagine; partial). A glycan (N-linked (GlcNAc...) asparagine; partial) is linked at N603. A glycan (N-linked (GlcNAc...) (high mannose) asparagine) is linked at N623. The chain crosses the membrane as a helical span at residues I646–M668. The Cytoplasmic segment spans residues R669 to A1210. Position 678 is a phosphothreonine; by PKC and PKD/PRKD1 (T678). Residues L688–L704 are important for dimerization, phosphorylation and activation. T693 carries the phosphothreonine; by PKD/PRKD1 modification. Position 695 is a phosphoserine (S695). One can recognise a Protein kinase domain in the interval F712–L979. A Glycyl lysine isopeptide (Lys-Gly) (interchain with G-Cter in ubiquitin) cross-link involves residue K716. An ATP-binding site is contributed by L718 to V726. K737 participates in a covalent cross-link: Glycyl lysine isopeptide (Lys-Gly) (interchain with G-Cter in ubiquitin). K745 is a binding site for ATP. K745 carries the N6-(2-hydroxyisobutyryl)lysine modification. Residues K754 and K757 each participate in a glycyl lysine isopeptide (Lys-Gly) (interchain with G-Cter in ubiquitin) cross-link. ATP is bound at residue T790 to Q791. The Proton acceptor role is filled by D837. D855 contributes to the ATP binding site. A Glycyl lysine isopeptide (Lys-Gly) (interchain with G-Cter in ubiquitin) cross-link involves residue K867. The residue at position 869 (Y869) is a Phosphotyrosine. Residues K929, K960, and K970 each participate in a glycyl lysine isopeptide (Lys-Gly) (interchain with G-Cter in ubiquitin) cross-link. 2 positions are modified to phosphoserine: S991 and S995. Residues Y998 and Y1016 each carry the phosphotyrosine; by autocatalysis modification. S1026 and S1039 each carry phosphoserine. Position 1041 is a phosphothreonine (T1041). Phosphoserine is present on S1042. C1049 is lipidated: S-palmitoyl cysteine. S1064 is modified (phosphoserine). Y1069 carries the phosphotyrosine modification. 3 positions are modified to phosphoserine: S1070, S1071, and S1081. Phosphotyrosine; by autocatalysis occurs at positions 1092 and 1110. Residues V1097–E1137 form a disordered region. 2 stretches are compositionally biased toward polar residues: residues S1104 to L1115 and P1128 to E1137. The S-palmitoyl cysteine moiety is linked to residue C1146. S1166 is modified (phosphoserine). A phosphotyrosine; by autocatalysis mark is found at Y1172 and Y1197. R1199 is subject to Omega-N-methylarginine.

The protein belongs to the protein kinase superfamily. Tyr protein kinase family. EGF receptor subfamily. In terms of assembly, binding of the ligand triggers homo- and/or heterodimerization of the receptor triggering its autophosphorylation. Heterodimer with ERBB2. Forms a complex with CCDC88A/GIV (via SH2-like regions) and GNAI3 which leads to enhanced EGFR signaling and triggering of cell migration; binding to CCDC88A requires autophosphorylation of the EGFR C-terminal region, and ligand stimulation is required for recruitment of GNAI3 to the complex. Interacts with ERRFI1; inhibits dimerization of the kinase domain and autophosphorylation. Part of a complex with ERBB2 and either PIK3C2A or PIK3C2B. Interacts with GRB2; an adapter protein coupling the receptor to downstream signaling pathways. Interacts with GAB2; involved in signaling downstream of EGFR. Interacts with STAT3; mediates EGFR downstream signaling in cell proliferation. Interacts with RIPK1; involved in NF-kappa-B activation. Interacts (autophosphorylated) with CBL, CBLB and CBLC; involved in EGFR ubiquitination and regulation; interaction with CBL is reduced in the presence of tensin TNS4. Interacts with SOCS5; regulates EGFR degradation through ELOC- and ELOB-mediated ubiquitination and proteasomal degradation. Interacts with PRMT5; methylates EGFR and enhances interaction with PTPN6. Interacts (phosphorylated) with PTPN6; inhibits EGFR-dependent activation of MAPK/ERK. Interacts with COPG1; essential for regulation of EGF-dependent nuclear transport of EGFR by retrograde trafficking from the Golgi to the ER. Interacts with TNK2; this interaction is dependent on EGF stimulation and kinase activity of EGFR. Interacts with PCNA; positively regulates PCNA. Interacts with PELP1. Interacts with MUC1. Interacts with AP2M1. Interacts with FER. May interact with EPS8; mediates EPS8 phosphorylation. Interacts (via SH2 domains) with GRB2, NCK1 and NCK2. Interacts with ATXN2. Interacts with GAREM1. Interacts (ubiquitinated) with ANKRD13A/B/D; the interaction is direct and may regulate EGFR internalization after EGF stimulation. Interacts with GPER1; the interaction occurs in an estrogen-dependent manner. Interacts (via C-terminal cytoplasmic kinase domain) with ZPR1 (via zinc fingers). Interacts with RNF115 and RNF126. Interacts with GPRC5A (via its transmembrane domain). Interacts with FAM83B; positively regulates EGFR inducing its autophosphorylation in absence of stimulation by EGF. Interacts with LAPTM4B; positively correlates with EGFR activation. Interacts with STX19. Interacts with CD44. Interacts with PGRMC1; the interaction requires PGRMC1 homodimerization. Interacts with PIKFYVE. Interacts with NEU3. Interacts with TRAF4. Interacts with the ant venom OMEGA-myrmeciitoxin(02)-Mg1a. Interacts with CD82; this interaction facilitates ligand-induced endocytosis of the receptor and its subsequent desensitization. In terms of processing, phosphorylated on Tyr residues in response to EGF. Phosphorylation at Ser-695 is partial and occurs only if Thr-693 is phosphorylated. Phosphorylation at Thr-678 and Thr-693 by PRKD1 inhibits EGF-induced MAPK8/JNK1 activation. Dephosphorylation by PTPRJ prevents endocytosis and stabilizes the receptor at the plasma membrane. Autophosphorylation at Tyr-1197 is stimulated by methylation at Arg-1199 and enhances interaction with PTPN6. Autophosphorylation at Tyr-1092 and/or Tyr-1110 recruits STAT3. Dephosphorylated by PTPN1 and PTPN2. Monoubiquitinated and polyubiquitinated upon EGF stimulation; which does not affect tyrosine kinase activity or signaling capacity but may play a role in lysosomal targeting. Polyubiquitin linkage is mainly through 'Lys-63', but linkage through 'Lys-48', 'Lys-11' and 'Lys-29' also occurs. Deubiquitination by OTUD7B prevents degradation. Ubiquitinated by RNF115 and RNF126. Ubiquitinated by ZNRF1 or CBL at different lysines in response to EGF stimulation; leading to recruitment of the ESCRT machinery and subsequent degradation in the lysosomes. Deubiquitinated by UCHL1 leading to the inhibition of its degradation. Post-translationally, palmitoylated on Cys residues by ZDHHC20. Palmitoylation inhibits internalization after ligand binding, and increases the persistence of tyrosine-phosphorylated EGFR at the cell membrane. Palmitoylation increases the amplitude and duration of EGFR signaling. In terms of processing, methylated. Methylation at Arg-1199 by PRMT5 stimulates phosphorylation at Tyr-1197. In terms of tissue distribution, ubiquitously expressed. Isoform 2 is also expressed in ovarian cancers.

Its subcellular location is the cell membrane. It localises to the endoplasmic reticulum membrane. The protein resides in the golgi apparatus membrane. The protein localises to the nucleus membrane. It is found in the endosome. Its subcellular location is the endosome membrane. It localises to the nucleus. The protein resides in the secreted. It catalyses the reaction L-tyrosyl-[protein] + ATP = O-phospho-L-tyrosyl-[protein] + ADP + H(+). With respect to regulation, endocytosis and inhibition of the activated EGFR by phosphatases like PTPRJ and PTPRK constitute immediate regulatory mechanisms. Upon EGF-binding phosphorylates EPS15 that regulates EGFR endocytosis and activity. Moreover, inducible feedback inhibitors including LRIG1, SOCS4, SOCS5 and ERRFI1 constitute alternative regulatory mechanisms for the EGFR signaling. Up-regulated by NEU3-mediated desialylation of N-linked glycan at Asn-528. Its function is as follows. Receptor tyrosine kinase binding ligands of the EGF family and activating several signaling cascades to convert extracellular cues into appropriate cellular responses. Known ligands include EGF, TGFA/TGF-alpha, AREG, epigen/EPGN, BTC/betacellulin, epiregulin/EREG and HBEGF/heparin-binding EGF. Ligand binding triggers receptor homo- and/or heterodimerization and autophosphorylation on key cytoplasmic residues. The phosphorylated receptor recruits adapter proteins like GRB2 which in turn activates complex downstream signaling cascades. Activates at least 4 major downstream signaling cascades including the RAS-RAF-MEK-ERK, PI3 kinase-AKT, PLCgamma-PKC and STATs modules. May also activate the NF-kappa-B signaling cascade. Also directly phosphorylates other proteins like RGS16, activating its GTPase activity and probably coupling the EGF receptor signaling to the G protein-coupled receptor signaling. Also phosphorylates MUC1 and increases its interaction with SRC and CTNNB1/beta-catenin. Positively regulates cell migration via interaction with CCDC88A/GIV which retains EGFR at the cell membrane following ligand stimulation, promoting EGFR signaling which triggers cell migration. Plays a role in enhancing learning and memory performance. Plays a role in mammalian pain signaling (long-lasting hypersensitivity). Isoform 2 may act as an antagonist of EGF action. In terms of biological role, (Microbial infection) Acts as a receptor for hepatitis C virus (HCV) in hepatocytes and facilitates its cell entry. Mediates HCV entry by promoting the formation of the CD81-CLDN1 receptor complexes that are essential for HCV entry and by enhancing membrane fusion of cells expressing HCV envelope glycoproteins. The polypeptide is Epidermal growth factor receptor (Homo sapiens (Human)).